We begin with the raw amino-acid sequence, 327 residues long: Urease accessory protein 4 (327 aa).

An N-linked (GlcNAc...) asparagine glycan is attached at Asn-120. A helical transmembrane segment spans residues 239 to 259; sequence VYATVLIIGPHLTTLFSYLAY.

Belongs to the UreD family. As to quaternary structure, URE4, URE6 and URE7 may form a complex that acts as a GTP-hydrolysis-dependent molecular chaperone, activating the urease apoprotein URE1.

The protein resides in the membrane. Its function is as follows. Urease accessory protein required for the maturation and activation of urease via the functional incorporation of the urease nickel metallocenter. Plays a role in host brain invasion. This chain is Urease accessory protein 4, found in Cryptococcus neoformans var. grubii serotype A (strain H99 / ATCC 208821 / CBS 10515 / FGSC 9487) (Filobasidiella neoformans var. grubii).